We begin with the raw amino-acid sequence, 68 residues long: DNA-directed RNA polymerase subunit omega (68 aa).

The protein belongs to the RNA polymerase subunit omega family. As to quaternary structure, the RNAP catalytic core consists of 2 alpha, 1 beta, 1 beta' and 1 omega subunit. When a sigma factor is associated with the core the holoenzyme is formed, which can initiate transcription.

The enzyme catalyses RNA(n) + a ribonucleoside 5'-triphosphate = RNA(n+1) + diphosphate. Its function is as follows. Promotes RNA polymerase assembly. Latches the N- and C-terminal regions of the beta' subunit thereby facilitating its interaction with the beta and alpha subunits. The chain is DNA-directed RNA polymerase subunit omega from Desulfitobacterium hafniense (strain DSM 10664 / DCB-2).